We begin with the raw amino-acid sequence, 388 residues long: LL-diaminopimelate aminotransferase (388 aa).

Positions 16 and 41 each coordinate substrate. Pyridoxal 5'-phosphate-binding positions include Tyr70, 104-105, Tyr129, Asn179, Tyr210, and 239-241; these read SK and SLS. 3 residues coordinate substrate: Lys105, Tyr129, and Asn179. Lys242 is modified (N6-(pyridoxal phosphate)lysine). A pyridoxal 5'-phosphate-binding site is contributed by Arg250. Arg368 is a substrate binding site.

Belongs to the class-I pyridoxal-phosphate-dependent aminotransferase family. LL-diaminopimelate aminotransferase subfamily. Homodimer. The cofactor is pyridoxal 5'-phosphate.

It carries out the reaction (2S,6S)-2,6-diaminopimelate + 2-oxoglutarate = (S)-2,3,4,5-tetrahydrodipicolinate + L-glutamate + H2O + H(+). It participates in amino-acid biosynthesis; L-lysine biosynthesis via DAP pathway; LL-2,6-diaminopimelate from (S)-tetrahydrodipicolinate (aminotransferase route): step 1/1. Involved in the synthesis of meso-diaminopimelate (m-DAP or DL-DAP), required for both lysine and peptidoglycan biosynthesis. Catalyzes the direct conversion of tetrahydrodipicolinate to LL-diaminopimelate. The chain is LL-diaminopimelate aminotransferase from Nitratidesulfovibrio vulgaris (strain DP4) (Desulfovibrio vulgaris).